The primary structure comprises 239 residues: Large ribosomal subunit protein uL1 (239 aa).

The protein belongs to the universal ribosomal protein uL1 family. As to quaternary structure, part of the 50S ribosomal subunit.

Its function is as follows. Binds directly to 23S rRNA. The L1 stalk is quite mobile in the ribosome, and is involved in E site tRNA release. Functionally, protein L1 is also a translational repressor protein, it controls the translation of the L11 operon by binding to its mRNA. The protein is Large ribosomal subunit protein uL1 of Acidothermus cellulolyticus (strain ATCC 43068 / DSM 8971 / 11B).